Here is a 558-residue protein sequence, read N- to C-terminus: Galactoside 2-alpha-L-fucosyltransferase (558 aa).

Residues 1–43 (MDQNSYRRRSSPIRTTTGGSKSVNFSELLQMKYLSSGTMKLTR) lie on the Cytoplasmic side of the membrane. The helical; Signal-anchor for type II membrane protein transmembrane segment at 44–64 (TFTTCLIVFSVLVAFSMIFHQ) threads the bilayer. The Lumenal portion of the chain corresponds to 65–558 (HPSDSNRIMG…EDISWGLKLV (494 aa)). N-linked (GlcNAc...) asparagine glycosylation is found at asparagine 88 and asparagine 504.

Belongs to the glycosyltransferase 37 family. As to quaternary structure, homodimer. Interacts with MUR3, XLT2, XXT2 and XXT5. Expressed in roots, stems, leaves, flowers, siliques and seedlings.

The protein resides in the golgi apparatus. Its subcellular location is the golgi stack membrane. It is found in the golgi apparatus membrane. In terms of biological role, involved in cell wall biosynthesis. Is both necessary and sufficient for the addition of the terminal fucosyl residue on xyloglucan side chains, but is not involved in the fucosylation of other cell wall components. Associates with other xyloglucan-synthesizing enzymes to form multiprotein complexes for xyloglucan synthesis in the Golgi. The chain is Galactoside 2-alpha-L-fucosyltransferase (FUT1) from Arabidopsis thaliana (Mouse-ear cress).